The chain runs to 337 residues: 1-aminocyclopropane-1-carboxylate deaminase (337 aa).

K50 carries the N6-(pyridoxal phosphate)lysine modification. S77 acts as the Nucleophile in catalysis.

The protein belongs to the ACC deaminase/D-cysteine desulfhydrase family. Homotrimer. The cofactor is pyridoxal 5'-phosphate.

The catalysed reaction is 1-aminocyclopropane-1-carboxylate + H2O = 2-oxobutanoate + NH4(+). Its function is as follows. Catalyzes a cyclopropane ring-opening reaction, the irreversible conversion of 1-aminocyclopropane-1-carboxylate (ACC) to ammonia and alpha-ketobutyrate. Allows growth on ACC as a nitrogen source. The protein is 1-aminocyclopropane-1-carboxylate deaminase of Bradyrhizobium diazoefficiens (strain JCM 10833 / BCRC 13528 / IAM 13628 / NBRC 14792 / USDA 110).